Here is a 973-residue protein sequence, read N- to C-terminus: Valine--tRNA ligase (973 aa).

A 'HIGH' region motif is present at residues 57–67 (PNVTGSLHMGH). Positions 569–573 (KMSKS) match the 'KMSKS' region motif. Lys-572 is a binding site for ATP. The stretch at 901–970 (MAGLIDKEAE…AKILEQKIQI (70 aa)) forms a coiled coil.

Belongs to the class-I aminoacyl-tRNA synthetase family. ValS type 1 subfamily. As to quaternary structure, monomer.

The protein localises to the cytoplasm. The enzyme catalyses tRNA(Val) + L-valine + ATP = L-valyl-tRNA(Val) + AMP + diphosphate. Its function is as follows. Catalyzes the attachment of valine to tRNA(Val). As ValRS can inadvertently accommodate and process structurally similar amino acids such as threonine, to avoid such errors, it has a 'posttransfer' editing activity that hydrolyzes mischarged Thr-tRNA(Val) in a tRNA-dependent manner. This Colwellia psychrerythraea (strain 34H / ATCC BAA-681) (Vibrio psychroerythus) protein is Valine--tRNA ligase.